A 167-amino-acid polypeptide reads, in one-letter code: MVYCPYNKEHKMLRKKLQQHILKCRVIYKDTVELMVCPFNSSHLIPEPQFFQHTQSCEDRNIIVHYQTSAPAVLSEDTRHAKIESEENWDDDESVPDYDPQVYCSRANIVREPNGLFPAQRRAFIEQEKRRHFGEDYEEEKKPRKAKARADLRPTPYEHRRPYSRRQ.

2 CHHC U11-48K-type zinc fingers span residues 1–28 (MVYC…RVIY) and 34–61 (LMVC…EDRN). Zn(2+) is bound by residues C4, H10, H20, C24, C37, H43, H53, and C57. The segment covering 128–161 (EKRRHFGEDYEEEKKPRKAKARADLRPTPYEHRR) has biased composition (basic and acidic residues). The interval 128-167 (EKRRHFGEDYEEEKKPRKAKARADLRPTPYEHRRPYSRRQ) is disordered.

This sequence belongs to the UPF0224 (FAM112) family. In terms of assembly, interacts with piwi.

The protein resides in the nucleus. In terms of biological role, acts via the piwi-interacting RNA (piRNA) pathway which mediates the repression of transposable elements during meiosis by forming complexes composed of piRNAs and piwi proteins and governs the methylation and subsequent repression of transposons. Required for repression of transposons and neighboring genes in ovarian somatic and germline cells. This chain is Gametocyte-specific factor 1 homolog, found in Drosophila melanogaster (Fruit fly).